The chain runs to 814 residues: Phosphatidylinositol 3-kinase VPS34 (814 aa).

The 153-residue stretch at 25 to 177 (LDGNLPVKKS…EKLMNKYERG (153 aa)) folds into the C2 PI3K-type domain. Residues 274–449 (DRDLKPSNIE…YSTYELLEEN (176 aa)) form the PIK helical domain. In terms of domain architecture, PI3K/PI4K catalytic spans 532–799 (VAGESSLFKS…LINESVSALF (268 aa)). The interval 538–544 (LFKSALH) is G-loop. The tract at residues 668–676 (GIGDRHLDN) is catalytic loop. The segment at 687-708 (HVDFAFILGRDPKPFPPPMKLC) is activation loop.

Belongs to the PI3/PI4-kinase family. As to quaternary structure, interacts with VPS15. Component of a complex made of VPS38/USL1 and PI3K main subunits such as VPS15, ATG6/VPS30 and VPS34. Binds directly to VPS38/USL1.

It carries out the reaction a 1,2-diacyl-sn-glycero-3-phospho-(1D-myo-inositol) + ATP = a 1,2-diacyl-sn-glycero-3-phospho-(1D-myo-inositol-3-phosphate) + ADP + H(+). Its activity is regulated as follows. The PI3K inhibitor LY294002 affects phosphatidylinositol 3-phosphate (PI3P) levels and triggers a decrease in proline, hydrophobic and aromatic amino acids, and sugars (e.g. raffinose) accumulation in response to salt treatment correlated with lower P5CS1 expression and higher ProDH1 expression, genes involved in proline biosynthesis and catabolism, respectively. Involved in the negative regulation of proline, hydrophobic and aromatic amino acids accumulation, especially in response to salt (NaCl), either through inhibition of their synthesis and/or promotion of their catabolism. Triggers defense responses (e.g. pathogenesis related (PR1 and PR5) gene expression and hydrogen peroxide H(2)O(2) burst) to the bacterial pathogen compatible Pseudomonas syringae pv tomato DC3000 (Pst DC3000) and incompatible Pst DC3000 (avrRpt2), by regulating reactive ogygen species (ROS) production and by promoting stomatal closure. The sequence is that of Phosphatidylinositol 3-kinase VPS34 from Arabidopsis thaliana (Mouse-ear cress).